The sequence spans 545 residues: Capsular polysaccharide phosphotransferase SacB (545 aa).

It belongs to the stealth family.

In terms of biological role, may be the polymerase that links individual UDP-N-acetyl-D-mannosamine monomers. In serotype A the capsule is composed of repeated units of (alpha 1-6)-linked N-acetyl-D-mannosamine-1-phosphate. The polypeptide is Capsular polysaccharide phosphotransferase SacB (sacB) (Neisseria meningitidis serogroup A).